The sequence spans 279 residues: Pantothenate synthetase (279 aa).

30–37 (MGALHAGH) lines the ATP pocket. H37 (proton donor) is an active-site residue. Residue Q61 participates in (R)-pantoate binding. Q61 serves as a coordination point for beta-alanine. ATP is bound at residue 147-150 (GEKD). Position 153 (Q153) interacts with (R)-pantoate. Residues A176 and 184–187 (LSSR) contribute to the ATP site.

This sequence belongs to the pantothenate synthetase family. Homodimer.

Its subcellular location is the cytoplasm. It carries out the reaction (R)-pantoate + beta-alanine + ATP = (R)-pantothenate + AMP + diphosphate + H(+). It participates in cofactor biosynthesis; (R)-pantothenate biosynthesis; (R)-pantothenate from (R)-pantoate and beta-alanine: step 1/1. Catalyzes the condensation of pantoate with beta-alanine in an ATP-dependent reaction via a pantoyl-adenylate intermediate. In Sphingopyxis alaskensis (strain DSM 13593 / LMG 18877 / RB2256) (Sphingomonas alaskensis), this protein is Pantothenate synthetase.